The sequence spans 247 residues: C-type lectin domain family 7 member A (247 aa).

The Cytoplasmic segment spans residues 1-44 (MEYQSSVENLDEDGYTQLDFSSRNITRRSVVSEKGLCAASSHWR). Residues 15 to 18 (YTQL) carry the ITAM-like motif. Residues 45–65 (LIAVTLGILCSVMLVITVVLS) form a helical; Signal-anchor for type II membrane protein membrane-spanning segment. Over 66–247 (TSGIWRSSSG…YSICEKKLSV (182 aa)) the chain is Extracellular. Residues 81–101 (SDSFPSRNKDNQSQPTQSSLE) show a composition bias toward polar residues. The interval 81-103 (SDSFPSRNKDNQSQPTQSSLEDS) is disordered. N91 is a glycosylation site (N-linked (GlcNAc...) asparagine). Cystine bridges form between C120–C131, C148–C241, and C220–C233. The C-type lectin domain occupies 127 to 242 (HEDSCYLFST…CSVHSYSICE (116 aa)). Residue 146–153 (RQCFQLGS) coordinates (1,3-beta-D-glucosyl)n. A divalent metal cation contacts are provided by K157, D159, and E163. A (1,3-beta-D-glucosyl)n-binding site is contributed by E195. E242 contacts a divalent metal cation.

In terms of assembly, homodimer. Interacts with SYK; participates in leukocyte activation in presence of fungal pathogens. Interacts with CD37; this interaction controls CLEC7A-mediated IL-6 production. Post-translationally, phosphorylated on tyrosine residues in response to beta-glucan binding. As to expression, detected in bone marrow, monocytes, macrophages, dendritic cells and natural killer cells.

It localises to the cell membrane. Functionally, lectin that functions as a pattern recognizing receptor (PRR) specific for beta-1,3-linked and beta-1,6-linked glucans, which constitute cell wall constituents from pathogenic bacteria and fungi. Necessary for the TLR2-mediated inflammatory response and activation of NF-kappa-B: upon beta-glucan binding, recruits SYK via its ITAM motif and promotes a signaling cascade that activates some CARD domain-BCL10-MALT1 (CBM) signalosomes, leading to the activation of NF-kappa-B and MAP kinase p38 (MAPK11, MAPK12, MAPK13 and/or MAPK14) pathways which stimulate expression of genes encoding pro-inflammatory cytokines and chemokines. Enhances cytokine production in macrophages and dendritic cells. Mediates production of reactive oxygen species in the cell. Mediates phagocytosis of C.albicans conidia. Binds T-cells in a way that does not involve their surface glycans and plays a role in T-cell activation. Stimulates T-cell proliferation. Induces phosphorylation of SCIMP after binding beta-glucans. In Bos taurus (Bovine), this protein is C-type lectin domain family 7 member A (CLEC7A).